Consider the following 376-residue polypeptide: MAKRDYYEVLGVARDVSEQDLKKAYRKVAMKFHPDRNPDDASAEEKFKEASEAYEVLSDKQKRAAYDQFGHAGVEGQGGMGGGAEGFGSFSDIFGDVFGDIFGGAGGGRGRGGPSRGADLRYTLDLSLEDAVRGTSVKIKVPTLVSCTNCGGSGAKPGTTATTCNTCGGHGQVRMQQGFFSVQQTCPTCRGQGKTISDPCNKCHGHGRVEETKTLSVKVPAGVDTGDRIRLAGEGEAGADGGPSGDLYVQVHVKDHEFFQREGRNLYCEVPISIFDACLGGDLEVPTLDGRVKLKVPAETQTGKLFRLRGKGVTPIRGGAAGDLLCRVIVETPVNLSNKQKELLEQLKDTFKGTQHSPKQQSWFEGMKNFFGDMKM.

The J domain maps to 5-70; the sequence is DYYEVLGVAR…QKRAAYDQFG (66 aa). The CR-type zinc-finger motif lies at 134-212; it reads GTSVKIKVPT…CHGHGRVEET (79 aa). Zn(2+) contacts are provided by C147, C150, C164, C167, C186, C189, C200, and C203. CXXCXGXG motif repeat units follow at residues 147-154, 164-171, 186-193, and 200-207; these read CTNCGGSG, CNTCGGHG, CPTCRGQG, and CNKCHGHG.

This sequence belongs to the DnaJ family. Homodimer. Zn(2+) serves as cofactor.

The protein localises to the cytoplasm. Its function is as follows. Participates actively in the response to hyperosmotic and heat shock by preventing the aggregation of stress-denatured proteins and by disaggregating proteins, also in an autonomous, DnaK-independent fashion. Unfolded proteins bind initially to DnaJ; upon interaction with the DnaJ-bound protein, DnaK hydrolyzes its bound ATP, resulting in the formation of a stable complex. GrpE releases ADP from DnaK; ATP binding to DnaK triggers the release of the substrate protein, thus completing the reaction cycle. Several rounds of ATP-dependent interactions between DnaJ, DnaK and GrpE are required for fully efficient folding. Also involved, together with DnaK and GrpE, in the DNA replication of plasmids through activation of initiation proteins. The polypeptide is Chaperone protein DnaJ (Teredinibacter turnerae (strain ATCC 39867 / T7901)).